The chain runs to 428 residues: Trigger factor (428 aa).

One can recognise a PPIase FKBP-type domain in the interval 163–248; it reads GDTAVIDFEG…IKEIKVKELP (86 aa).

It belongs to the FKBP-type PPIase family. Tig subfamily.

It is found in the cytoplasm. The catalysed reaction is [protein]-peptidylproline (omega=180) = [protein]-peptidylproline (omega=0). Its function is as follows. Involved in protein export. Acts as a chaperone by maintaining the newly synthesized protein in an open conformation. Functions as a peptidyl-prolyl cis-trans isomerase. The chain is Trigger factor from Ruminiclostridium cellulolyticum (strain ATCC 35319 / DSM 5812 / JCM 6584 / H10) (Clostridium cellulolyticum).